Reading from the N-terminus, the 242-residue chain is Probable transcriptional regulatory protein Bxeno_A1185 (242 aa).

The protein belongs to the TACO1 family.

It is found in the cytoplasm. The protein is Probable transcriptional regulatory protein Bxeno_A1185 of Paraburkholderia xenovorans (strain LB400).